A 302-amino-acid polypeptide reads, in one-letter code: MANSQTVMAMIRLARPPFRNNHDKVAFAIHSSFVASGYILTATGRPAFADEALSSSSQNDVGIEGWNEFEGEYAFVYANPKKGSKKILVKCLAMDDKLLVDAIADGGAEPAHLEIKVGDYAEESNEGDYSAQFKNLDKLVTDLQSEIIDKLDGKPKPVASRAQSSSETNEEPRYYDDTPNPLGPQIHPSGVVVPPIPGNGGYSDLFPGPGAGMYPGRGGFGDGSMLVGPTDPRFFPFGDGSDRPGFMGPPHPGMPPPGARFDPYGPPGVPGFEPGRFTRQPPRGPGGGHPDLEHFPGGSDFI.

Ala2 carries the post-translational modification N-acetylalanine. Disordered regions lie at residues 151-188 (LDGK…QIHP) and 259-302 (ARFD…SDFI). Residues 259–269 (ARFDPYGPPGV) are compositionally biased toward pro residues.

It belongs to the proteasome inhibitor PI31 family.

Its function is as follows. Could play an important role in control of proteasome function. Inhibits the hydrolysis of protein and peptide substrates by the 20S proteasome. This Arabidopsis thaliana (Mouse-ear cress) protein is Probable proteasome inhibitor.